The chain runs to 98 residues: Small ribosomal subunit protein eS24 (98 aa).

Belongs to the eukaryotic ribosomal protein eS24 family.

This Thermococcus sibiricus (strain DSM 12597 / MM 739) protein is Small ribosomal subunit protein eS24.